We begin with the raw amino-acid sequence, 367 residues long: Heat-inducible transcription repressor HrcA (367 aa).

The protein belongs to the HrcA family.

Its function is as follows. Negative regulator of class I heat shock genes (grpE-dnaK-dnaJ and groELS operons). Prevents heat-shock induction of these operons. The chain is Heat-inducible transcription repressor HrcA from Acaryochloris marina (strain MBIC 11017).